A 226-amino-acid polypeptide reads, in one-letter code: Deoxyribose-phosphate aldolase (226 aa).

The active-site Proton donor/acceptor is aspartate 95. The active-site Schiff-base intermediate with acetaldehyde is lysine 157. The active-site Proton donor/acceptor is the lysine 186.

It belongs to the DeoC/FbaB aldolase family. DeoC type 1 subfamily.

The protein resides in the cytoplasm. The catalysed reaction is 2-deoxy-D-ribose 5-phosphate = D-glyceraldehyde 3-phosphate + acetaldehyde. It participates in carbohydrate degradation; 2-deoxy-D-ribose 1-phosphate degradation; D-glyceraldehyde 3-phosphate and acetaldehyde from 2-deoxy-alpha-D-ribose 1-phosphate: step 2/2. Its activity is regulated as follows. Partially inhibited by acetaldehyde. After incubation for 2, 4 and 6 hours in 300 mM acetaldehyde at 25 degrees Celsius, retains approximately 61.32%, 42.33% and 34.73% of the initial 2-deoxy-D-ribose-5-phosphate (DR5P) cleavage activity, respectively. Its function is as follows. Catalyzes a reversible aldol reaction between acetaldehyde and D-glyceraldehyde 3-phosphate to generate 2-deoxy-D-ribose 5-phosphate. In terms of biological role, in vitro, DERA can catalyze the aldol condensation of chloroacetaldehyde (CHAD) and acetaldehyde (ACD), yielding (S)-4-chloro-3-hydroxybutanal ((S)-CHB), which can combine with another aldehyde to form (3R,5S)-6-chloro-2,4,6-trideoxyhexapyranose (CTeHP), a key intermediate for statin drugs. The protein is Deoxyribose-phosphate aldolase of Pseudomonas syringae pv. syringae (strain B728a).